The sequence spans 198 residues: Peptidyl-tRNA hydrolase (198 aa).

Y15 contacts tRNA. The Proton acceptor role is filled by H20. 3 residues coordinate tRNA: F66, N68, and N114.

Belongs to the PTH family. As to quaternary structure, monomer.

The protein resides in the cytoplasm. It carries out the reaction an N-acyl-L-alpha-aminoacyl-tRNA + H2O = an N-acyl-L-amino acid + a tRNA + H(+). In terms of biological role, hydrolyzes ribosome-free peptidyl-tRNAs (with 1 or more amino acids incorporated), which drop off the ribosome during protein synthesis, or as a result of ribosome stalling. Catalyzes the release of premature peptidyl moieties from peptidyl-tRNA molecules trapped in stalled 50S ribosomal subunits, and thus maintains levels of free tRNAs and 50S ribosomes. This is Peptidyl-tRNA hydrolase from Cupriavidus metallidurans (strain ATCC 43123 / DSM 2839 / NBRC 102507 / CH34) (Ralstonia metallidurans).